The following is a 256-amino-acid chain: Lysosomal membrane ascorbate-dependent ferrireductase CYB561A3 (256 aa).

Residues 1 to 3 (MAS) are Cytoplasmic-facing. The helical transmembrane segment at 4–24 (GWFYMSCMVLGSLGSMCILFT) threads the bilayer. Residues 12 to 219 (VLGSLGSMCI…FGLLVLYILL (208 aa)) enclose the Cytochrome b561 domain. At 25-40 (TYWMQYWRGGFAWDGT) the chain is on the lumenal side. Residues 41–61 (VLMFNWHPVLMVSGMVVLYGA) traverse the membrane as a helical segment. Positions 47 and 67 each coordinate heme b. At 62–83 (ASLVYRLPASWVGPKLPWKVLH) the chain is on the cytoplasmic side. L-ascorbate is bound by residues Lys76 and Lys80. His83 is a binding site for heme b. A helical transmembrane segment spans residues 84–104 (AALHLLAFTVTVVGLTAVFGF). At 105-119 (HNHSKITHLYSLHSW) the chain is on the lumenal side. N-linked (GlcNAc...) asparagine glycosylation occurs at Asn106. Residues 112-115 (HLYS) and His117 contribute to the heme b site. A helical transmembrane segment spans residues 120 to 140 (LGITTVALFACQWFLGFAVFL). Topologically, residues 141 to 154 (LPWASQWLRSLLKP) are cytoplasmic. Residue Arg149 participates in L-ascorbate binding. The helical transmembrane segment at 155–175 (VHVFFGACILSLSIASVISGI) threads the bilayer. Positions 156 and 177 each coordinate heme b. Residues 176-202 (NEKLFFVLKNATRPYSSLPGEAVFANS) are Lumenal-facing. A helical membrane pass occupies residues 203–223 (TGILVVSFGLLVLYILLASSW). Arg224 is a heme b binding site. The Cytoplasmic segment spans residues 224–256 (RRPDPGALTDRQVWLLVSHYRWDKAKKACFAPC).

Homodimer. The cofactor is heme b. In terms of processing, N-glycosylated.

It is found in the late endosome membrane. It localises to the lysosome membrane. It carries out the reaction Fe(3+)(out) + L-ascorbate(in) = monodehydro-L-ascorbate radical(in) + Fe(2+)(out) + H(+). Functionally, transmembrane reductase that uses ascorbate as an electron donor in the cytoplasm and transfers electrons across membranes to reduce iron cations Fe(3+) into Fe(2+) in the lumen of the late endosome and lysosome. Reduced iron can then be extruded from the late endosome and lysosome to the cytoplasm by divalent metal-specific transporters. It is therefore most probably involved in endosomal and lysosomal cellular iron homeostasis. The protein is Lysosomal membrane ascorbate-dependent ferrireductase CYB561A3 of Rattus norvegicus (Rat).